The primary structure comprises 99 residues: Putative septation protein SpoVG (99 aa).

The protein belongs to the SpoVG family.

Its function is as follows. Could be involved in septation. The polypeptide is Putative septation protein SpoVG (Onion yellows phytoplasma (strain OY-M)).